Here is a 124-residue protein sequence, read N- to C-terminus: Large ribosomal subunit protein bL20c (124 aa).

Belongs to the bacterial ribosomal protein bL20 family.

Its subcellular location is the plastid. It is found in the chloroplast. Functionally, binds directly to 23S ribosomal RNA and is necessary for the in vitro assembly process of the 50S ribosomal subunit. It is not involved in the protein synthesizing functions of that subunit. The protein is Large ribosomal subunit protein bL20c (rpl20) of Euglena gracilis.